The primary structure comprises 431 residues: uncharacterized protein (431 aa).

Helical transmembrane passes span 33-53 (VARV…VIYL), 63-83 (FSVF…ANGL), 111-131 (VSGM…PLWS), 143-163 (VALL…LGML), 175-195 (LMVA…VIGW), 197-217 (LVGF…MLMT), 241-261 (AHSI…PVLL), 273-293 (GVVI…LTAM), 318-338 (LIGG…PWIM), 358-378 (AAAV…AAAL), 381-401 (AYSL…LLPL), and 407-427 (TVVA…VALA).

It to M.tuberculosis Rv1510 and M.bovis Mb3654.

Its subcellular location is the cell membrane. This is an uncharacterized protein from Mycobacterium tuberculosis (strain ATCC 25618 / H37Rv).